A 1293-amino-acid polypeptide reads, in one-letter code: Putative DNA-directed RNA polymerase 008R (1293 aa).

Zn(2+) contacts are provided by cysteine 61, cysteine 64, cysteine 71, histidine 74, cysteine 99, cysteine 102, and cysteine 123. The DNA-binding element occupies 270–339 (TNRKPMAGIK…PVMVTPFNVS (70 aa)). The segment covering 354 to 376 (EMRDGTVHRPSEWRPSHGDHMET) has biased composition (basic and acidic residues). The disordered stretch occupies residues 354 to 390 (EMRDGTVHRPSEWRPSHGDHMETADGSPLGRVTRPSY). Aspartate 474, aspartate 476, and aspartate 478 together coordinate Mg(2+). The segment at 724–734 (GQQYVGGSRPG) is alpha-amanitin binding. Residues 776 to 788 (PREVFFHAKSGRE) are bridging helix.

This sequence belongs to the RNA polymerase beta' chain family.

The catalysed reaction is RNA(n) + a ribonucleoside 5'-triphosphate = RNA(n+1) + diphosphate. Its function is as follows. Component of the DNA-dependent RNA polymerase that catalyzes the transcription of DNA into RNA using the four ribonucleoside triphosphates as substrates. Largest and catalytic component of RNA polymerase II which synthesizes mRNA precursors and many functional non-coding RNAs. Forms the polymerase active center together with the second largest subunit. This chain is Putative DNA-directed RNA polymerase 008R, found in Frog virus 3 (isolate Goorha) (FV-3).